A 149-amino-acid chain; its full sequence is Myosin, essential light chain (149 aa).

2 consecutive EF-hand domains span residues 7–42 and 79–114; these read SMIDEMKDGFPLFDNKGDGKIDGAQLGDVLRSFGLN and GSYEDFFEGLKLFDKEGTGLISGAELRHVLATLGEK.

As to quaternary structure, myosin is a hexamer of 2 heavy chains and 4 light chains (two regulatory light chains and two essential light chains).

The sequence is that of Myosin, essential light chain from Branchiostoma floridae (Florida lancelet).